The chain runs to 415 residues: Squalene synthase 10 (415 aa).

Transmembrane regions (helical) follow at residues 281–301 and 392–412; these read AIFRFCAIPQIMAIGTLALCF and LIVILFIILAILYAYLSSNLP.

The protein belongs to the phytoene/squalene synthase family. It depends on Mg(2+) as a cofactor. Mn(2+) serves as cofactor.

It localises to the endoplasmic reticulum membrane. It catalyses the reaction 2 (2E,6E)-farnesyl diphosphate + NADH + H(+) = squalene + 2 diphosphate + NAD(+). It carries out the reaction 2 (2E,6E)-farnesyl diphosphate + NADPH + H(+) = squalene + 2 diphosphate + NADP(+). Its pathway is terpene metabolism; lanosterol biosynthesis; lanosterol from farnesyl diphosphate: step 1/3. In terms of biological role, component of the triterpene saponins (e.g. ginsenosides or panaxosides) and phytosterols biosynthetic pathways. Catalyzes the biosynthesis of squalene. This chain is Squalene synthase 10, found in Panax ginseng (Korean ginseng).